A 1481-amino-acid polypeptide reads, in one-letter code: Neuropathy target esterase sws (1481 aa).

Over 1 to 34 the chain is Lumenal; that stretch reads MDVLELLRASANGCYNTIFSDAWSQYVSQQITSS. Residues 35–55 form a helical membrane-spanning segment; sequence LYLYIALGILTVLFVAWFIYF. Topologically, residues 56–1481 are cytoplasmic; the sequence is KRLARLRLRD…KENKNVNTKN (1426 aa). 175-302 provides a ligand contact to a nucleoside 3',5'-cyclic phosphate; the sequence is IFGHFEKPVF…IRVIQVIMIR (128 aa). Residues 336 to 420 form a disordered region; sequence HLNSQSQSSQ…NNVQLPEVHG (85 aa). Low complexity-rich tracts occupy residues 339 to 379 and 401 to 412; these read SQSQ…LPLQ and SGPNPNPNSGNN. Position 448 is a phosphoserine (S448). Residues 492–624 and 613–740 contribute to the a nucleoside 3',5'-cyclic phosphate site; these read ELGL…VVRR and IVLD…LSHR. The PNPLA domain occupies 967–1133; that stretch reads LVLGGGGARG…VNNLPGHLWR (167 aa). The GXGXXG signature appears at 971–976; sequence GGGARG. A GXSXG motif is present at residues 998-1002; it reads GVSIG. S1000 (nucleophile) is an active-site residue. D1120 functions as the Proton acceptor in the catalytic mechanism. The short motif at 1120 to 1122 is the DGA/G element; it reads DGG. S1214 is subject to Phosphoserine. The disordered stretch occupies residues 1366-1481; it reads LSLSEAEMDS…KENKNVNTKN (116 aa). Basic and acidic residues-rich tracts occupy residues 1379–1390 and 1400–1410; these read IDFRSDSKKDKA and KDNEDKTDAVD. A compositionally biased stretch (low complexity) spans 1445–1457; sequence TNTMTTQTTSPTT.

The protein belongs to the NTE family. Interacts with Pka-C3; interaction inhibits the catalytic function of Pka-C3 and the esterase activity of sws.

Its subcellular location is the endoplasmic reticulum membrane. It catalyses the reaction a 1-acyl-sn-glycero-3-phosphocholine + H2O = sn-glycerol 3-phosphocholine + a fatty acid + H(+). Phospholipase B that deacylates intracellular phosphatidylcholine (PtdCho), generating glycerophosphocholine (GroPtdCho). This deacylation occurs at both sn-2 and sn-1 positions of PtdCho. Its specific chemical modification by certain organophosphorus (OP) compounds leads to distal axonopathy. Plays a role in the signaling mechanism between neurons and glia that regulates glia wrapping during development of the adult brain. Essential for membrane lipid homeostasis and cell survival in both neurons and glia of the adult brain. The chain is Neuropathy target esterase sws from Drosophila willistoni (Fruit fly).